The primary structure comprises 327 residues: MENVFDYEDIQLIPAKCIVNSRSECDTTVTLGKHKFKLPVVPANMQTIIDERIATYLAENNYFYIMHRFQPEKRISFIRDMQSRGLIASISVGVKEDEYEFVQQLAAEHLTPEYITIDIAHGHSNAVINMIQHIKKHLPESFVIAGNVGTPEAVRELENAGADATKVGIGPGKVCITKIKTGFGTGGWQLAALRWCAKAASKPIIADGGIRTHGDVAKSIRFGATMVMIGSLFAGHEESPGETIEKDGKLYKEYFGSASEFQKGEKKNVEGKKMFVEHKGSLEDTLIEMEQDLQSSISYAGGTKLDSIRTVDYVVVKNSIFNGDKVY.

Cysteine 175 (thioimidate intermediate) is an active-site residue. 204 to 227 lines the NADP(+) pocket; it reads IIADGGIRTHGDVAKSIRFGATMV.

It belongs to the IMPDH/GMPR family. GuaC type 2 subfamily.

It carries out the reaction IMP + NH4(+) + NADP(+) = GMP + NADPH + 2 H(+). Functionally, catalyzes the irreversible NADPH-dependent deamination of GMP to IMP. It functions in the conversion of nucleobase, nucleoside and nucleotide derivatives of G to A nucleotides, and in maintaining the intracellular balance of A and G nucleotides. In Bacillus thuringiensis subsp. konkukian (strain 97-27), this protein is GMP reductase.